A 536-amino-acid polypeptide reads, in one-letter code: Phosphoenolpyruvate carboxykinase (ATP) (536 aa).

Arg-61, Tyr-195, and Lys-201 together coordinate substrate. Residues Lys-201, His-220, and 236-244 each bind ATP; that span reads GLSGTGKTT. 2 residues coordinate Mn(2+): Lys-201 and His-220. Asp-257 is a binding site for Mn(2+). Residues Glu-285, Arg-322, and Thr-447 each contribute to the ATP site. A substrate-binding site is contributed by Arg-322.

This sequence belongs to the phosphoenolpyruvate carboxykinase (ATP) family. Mn(2+) is required as a cofactor.

It localises to the cytoplasm. It catalyses the reaction oxaloacetate + ATP = phosphoenolpyruvate + ADP + CO2. It participates in carbohydrate biosynthesis; gluconeogenesis. Its function is as follows. Involved in the gluconeogenesis. Catalyzes the conversion of oxaloacetate (OAA) to phosphoenolpyruvate (PEP) through direct phosphoryl transfer between the nucleoside triphosphate and OAA. The polypeptide is Phosphoenolpyruvate carboxykinase (ATP) (Rhizobium meliloti (strain 1021) (Ensifer meliloti)).